A 474-amino-acid polypeptide reads, in one-letter code: Trigger factor (474 aa).

Residues 171 to 258 (GDVAVIDFQG…LKELKTRDLP (88 aa)) enclose the PPIase FKBP-type domain. The tract at residues 441 to 474 (TEVDAASATVETTATETAEEAPEAPKAKKGKKKA) is disordered. Residues 444-456 (DAASATVETTATE) show a composition bias toward low complexity.

This sequence belongs to the FKBP-type PPIase family. Tig subfamily.

Its subcellular location is the cytoplasm. It catalyses the reaction [protein]-peptidylproline (omega=180) = [protein]-peptidylproline (omega=0). Its function is as follows. Involved in protein export. Acts as a chaperone by maintaining the newly synthesized protein in an open conformation. Functions as a peptidyl-prolyl cis-trans isomerase. The chain is Trigger factor from Synechococcus elongatus (strain ATCC 33912 / PCC 7942 / FACHB-805) (Anacystis nidulans R2).